Here is a 274-residue protein sequence, read N- to C-terminus: Protein FRG1 homolog (274 aa).

The short motif at 20–36 (KKNLFKVGKEKKKKNKD) is the Nuclear localization signal element. Positions 27–46 (GKEKKKKNKDDKEKIDPDTV) are disordered. The span at 34–43 (NKDDKEKIDP) shows a compositional bias: basic and acidic residues. Positions 252-268 (QADGSAHELLLDRRMKM) match the Bipartite nuclear localization signal motif.

The protein belongs to the FRG1 family.

It is found in the nucleus. It localises to the cajal body. Its subcellular location is the nucleolus. The protein localises to the cytoplasm. Functionally, binds to mRNA in a sequence-independent manner. May play a role in regulation of pre-mRNA splicing or in the assembly of rRNA into ribosomal subunits. May be involved in mRNA transport. May be involved in epigenetic regulation of muscle differentiation through regulation of activity of the histone-lysine N-methyltransferase KMT5B. This chain is Protein FRG1 homolog (frg-1), found in Caenorhabditis elegans.